The primary structure comprises 65 residues: MAKKGTRIVVTLECTESRTVPSSKKRSAGVSRYTTEKNRRNTTERLELKKFCPELNKMTIHREIK.

The interval 19 to 40 is disordered; it reads TVPSSKKRSAGVSRYTTEKNRR.

This sequence belongs to the bacterial ribosomal protein bL33 family.

This chain is Large ribosomal subunit protein bL33, found in Prochlorococcus marinus (strain NATL2A).